A 356-amino-acid chain; its full sequence is Histidinol-phosphate aminotransferase (356 aa).

Position 214 is an N6-(pyridoxal phosphate)lysine (lysine 214).

The protein belongs to the class-II pyridoxal-phosphate-dependent aminotransferase family. Histidinol-phosphate aminotransferase subfamily. Homodimer. The cofactor is pyridoxal 5'-phosphate.

It catalyses the reaction L-histidinol phosphate + 2-oxoglutarate = 3-(imidazol-4-yl)-2-oxopropyl phosphate + L-glutamate. The protein operates within amino-acid biosynthesis; L-histidine biosynthesis; L-histidine from 5-phospho-alpha-D-ribose 1-diphosphate: step 7/9. This is Histidinol-phosphate aminotransferase from Escherichia coli O6:K15:H31 (strain 536 / UPEC).